Here is a 345-residue protein sequence, read N- to C-terminus: Trace amine-associated receptor 6 (345 aa).

At 1–32 (MGSNSSPPTVLQLCYENVTGSCVKTPYSPGSR) the chain is on the extracellular side. Asn17 carries N-linked (GlcNAc...) asparagine glycosylation. 2 disulfides stabilise this stretch: Cys22–Cys186 and Cys105–Cys190. The chain crosses the membrane as a helical span at residues 33-53 (VILYAVFGFGAVLAVFGNLMV). The Cytoplasmic portion of the chain corresponds to 54–68 (MISILHFKQLHSPTN). Residues 69–89 (FLIASLACADFGVGISVMPFS) traverse the membrane as a helical segment. Topologically, residues 90 to 107 (MVRSIESCWYFGRSFCTF) are extracellular. Residues 108–128 (HTCCDVAFCYSSLFHLSFISI) traverse the membrane as a helical segment. Topologically, residues 129 to 147 (DRYIAVTDPLVYPTKFTVS) are cytoplasmic. Residues 148–168 (VSGICIGVSWILPLVYSGAVF) form a helical membrane-spanning segment. Residues 169–202 (YTGVYDDGLEELSSALNCVGGCQVVVNQNWVLID) are Extracellular-facing. The interval 174–187 (DDGLEELSSALNCV) is extracellular Loop 2 (ECL2). The helical transmembrane segment at 203 to 223 (FLSFLIPTLVMIILYGNIFLV) threads the bilayer. Over 224 to 259 (ARQQAKKIENIGSKTESSSESYKARVARRERKAAKT) the chain is Cytoplasmic. A helical membrane pass occupies residues 260–276 (LGITVVAFMISWLPYSI). Over 277 to 282 (DSLVDA) the chain is Extracellular. A helical membrane pass occupies residues 283-302 (FMGFITPAYIYEICVWCAYY). The Cytoplasmic segment spans residues 303–345 (NSAMNPLIYALFYPWFKKAIKVIMSGQVFKNSSATMNLFSEQI).

The protein belongs to the G-protein coupled receptor 1 family. Specifically expressed in neurons of the olfactory epithelium, to discrete glomeruli predominantly localized to a confined bulb region. Present in a ventral area of the main olfactory epithelium.

It is found in the cell membrane. Functionally, olfactory receptor specific for trace amines, such as beta-phenylethylamine (beta-PEA). Trace amine compounds are enriched in animal body fluids and act on trace amine-associated receptors (TAARs) to elicit both intraspecific and interspecific innate behaviors. Beta-PEA-binding causes a conformation change that triggers signaling via G(s)-class of G alpha proteins (GNAL or GNAS). This is Trace amine-associated receptor 6 from Mus musculus (Mouse).